The chain runs to 380 residues: Glucose-1-phosphate adenylyltransferase (380 aa).

Alpha-D-glucose 1-phosphate contacts are provided by residues Gly164, 179 to 180, and Ser190; that span reads EK.

The protein belongs to the bacterial/plant glucose-1-phosphate adenylyltransferase family. In terms of assembly, homotetramer.

The enzyme catalyses alpha-D-glucose 1-phosphate + ATP + H(+) = ADP-alpha-D-glucose + diphosphate. The protein operates within glycan biosynthesis; glycogen biosynthesis. Functionally, involved in the biosynthesis of ADP-glucose, a building block required for the elongation reactions to produce glycogen. Catalyzes the reaction between ATP and alpha-D-glucose 1-phosphate (G1P) to produce pyrophosphate and ADP-Glc. This chain is Glucose-1-phosphate adenylyltransferase, found in Lactococcus lactis subsp. cremoris (strain MG1363).